The chain runs to 130 residues: uncharacterized protein (130 aa).

A signal peptide spans 1 to 23 (MINRKVVYALSALLLFVYSYAFI).

This is an uncharacterized protein from Aquifex aeolicus (strain VF5).